We begin with the raw amino-acid sequence, 160 residues long: Suppressyn (160 aa).

The N-terminal stretch at 1–39 (MACIYPTTFYTSLPTKSLNMGISLTTILILSVAVLLSTA) is a signal peptide. The tract at residues 137–160 (AKASKPTTPPENRPRHFHSFIQKL) is disordered.

As to quaternary structure, interacts (secreted) with SLC1A5; mainly at cell surface. In terms of tissue distribution, specifically expressed in placenta by extravillous trophoblasts and syncytiotrophoblasts (at protein level).

The protein localises to the secreted. In terms of biological role, may play a role in trophoblasts syncytialization, the spontaneous fusion of their plasma membranes, an essential process in placental development. May negatively regulate cell-cell fusion by interacting with SLC1A5, the probable receptor on the cell surface of the fusogenic syncytin-1/ERVW-1. The polypeptide is Suppressyn (ERVH48-1) (Homo sapiens (Human)).